The sequence spans 269 residues: UPF0761 membrane protein HI_0276 (269 aa).

The next 6 helical transmembrane spans lie at 32–52 (MLAM…FPVF), 89–109 (MSAV…NNID), 128–148 (FAIY…SIGI), 168–188 (LLSF…YTVV), 203–223 (FLAA…IVTF), and 232–252 (AMAT…VVLV).

This sequence belongs to the UPF0761 family.

The protein localises to the cell inner membrane. This is UPF0761 membrane protein HI_0276 from Haemophilus influenzae (strain ATCC 51907 / DSM 11121 / KW20 / Rd).